A 405-amino-acid chain; its full sequence is Phosphoglycerate kinase (405 aa).

Substrate contacts are provided by residues 21 to 23 (DFN), R36, 59 to 62 (HLGR), R119, and R161. Residues K212, G301, E332, and 361–364 (GGDS) contribute to the ATP site.

The protein belongs to the phosphoglycerate kinase family. As to quaternary structure, monomer.

The protein resides in the cytoplasm. It carries out the reaction (2R)-3-phosphoglycerate + ATP = (2R)-3-phospho-glyceroyl phosphate + ADP. It functions in the pathway carbohydrate degradation; glycolysis; pyruvate from D-glyceraldehyde 3-phosphate: step 2/5. In Leuconostoc citreum (strain KM20), this protein is Phosphoglycerate kinase.